The sequence spans 269 residues: UPF0524 protein C3orf70 homolog A (269 aa).

2 disordered regions span residues 139–203 and 215–249; these read VQRP…DSGI and DEDSCVDDDDEEEEDDELSTDGNSSPGSFWDQDEC. Over residues 141–150 the composition is skewed to pro residues; sequence RPPPPTPNPT. Positions 151–164 are enriched in low complexity; the sequence is HQPQTAAPQPVPQR. A compositionally biased stretch (basic and acidic residues) spans 179 to 191; the sequence is QAKEKISAPKMDH. The segment covering 215–233 has biased composition (acidic residues); sequence DEDSCVDDDDEEEEDDELS.

This sequence belongs to the UPF0524 family.

Functionally, plays a role in neuronal and neurobehavioral development. Required for normal expression of neuronal markers elavl3 and eno2 and neurobehaviors related to circadian rhythm and changes in light-dark conditions. This Danio rerio (Zebrafish) protein is UPF0524 protein C3orf70 homolog A.